Consider the following 164-residue polypeptide: ATP synthase subunit b (164 aa).

The helical transmembrane segment at 6–26 (GELIGNFILITGSFILLLVLI) threads the bilayer.

Belongs to the ATPase B chain family. As to quaternary structure, F-type ATPases have 2 components, F(1) - the catalytic core - and F(0) - the membrane proton channel. F(1) has five subunits: alpha(3), beta(3), gamma(1), delta(1), epsilon(1). F(0) has three main subunits: a(1), b(2) and c(10-14). The alpha and beta chains form an alternating ring which encloses part of the gamma chain. F(1) is attached to F(0) by a central stalk formed by the gamma and epsilon chains, while a peripheral stalk is formed by the delta and b chains.

The protein localises to the cell membrane. Functionally, f(1)F(0) ATP synthase produces ATP from ADP in the presence of a proton or sodium gradient. F-type ATPases consist of two structural domains, F(1) containing the extramembraneous catalytic core and F(0) containing the membrane proton channel, linked together by a central stalk and a peripheral stalk. During catalysis, ATP synthesis in the catalytic domain of F(1) is coupled via a rotary mechanism of the central stalk subunits to proton translocation. Component of the F(0) channel, it forms part of the peripheral stalk, linking F(1) to F(0). The chain is ATP synthase subunit b from Streptococcus pneumoniae serotype 2 (strain D39 / NCTC 7466).